A 166-amino-acid chain; its full sequence is UPF0134 protein MPN_138 (166 aa).

It belongs to the UPF0134 family.

The chain is UPF0134 protein MPN_138 from Mycoplasma pneumoniae (strain ATCC 29342 / M129 / Subtype 1) (Mycoplasmoides pneumoniae).